Here is a 1627-residue protein sequence, read N- to C-terminus: Surface protein G (1627 aa).

A signal peptide spans 1-50 (MRDKKGPVNKRVDFLSNKLNKYSIRKFTVGTASILIGSLMYLGTQQEAEA). The short motif at 22 to 33 (YSIRKFTVGTAS) is the YSIRK-G/S signaling motif element. Positions 51 to 418 (AENNIENPTT…KGSEFTFTPE (368 aa)) are ligand binding A region, squamous nasal epithelial cell binding. 3 disordered regions span residues 74–143 (EVTN…VRKA), 440–467 (KFNP…TTPT), and 496–1601 (EYGP…TGLE). Basic and acidic residues-rich tracts occupy residues 96-120 (DTIE…KEVA), 451-461 (KVTREGQKGEK), 505-523 (GHRD…EEVP), 554-570 (SIVE…RKFN), 579-589 (KVTREGQKGEK), 606-619 (SKGE…KDPI), 633-651 (GHRD…EEVP), 682-698 (SIVE…RKFN), 707-717 (KVTREGQKGEK), 736-747 (GEPKEEITKDPI), 761-779 (GHRD…EEVP), 810-826 (SIVE…RKFN), 835-845 (KVTREGQKGEK), 862-875 (SKGE…KDPI), 889-907 (GHRD…EEVP), 938-954 (SIVE…RKFN), 963-973 (KVTREGQKGEK), 990-1003 (SKGE…KDPI), 1017-1035 (GHRD…EEVP), 1066-1082 (SIVE…RKFN), 1091-1101 (KVTREGQKGEK), 1118-1131 (SKGE…KDPI), 1145-1163 (GHRD…EEVP), 1194-1210 (SIVE…RKFN), 1219-1229 (KVTREGQKGEK), 1246-1259 (SKGE…KDPI), 1273-1291 (GHRD…EEVP), 1322-1338 (SIVE…RKFN), 1347-1357 (KVTREGQKGEK), 1374-1387 (SKGE…KDPV), 1431-1442 (KVIEEPVDDVIK), and 1459-1478 (FETK…RVKQ). The G5 1 domain maps to 419–501 (APKTITELEK…NELTEYGPET (83 aa)). A G5 2 domain is found at 547-629 (YGPVKGDSIV…NELTEYGPET (83 aa)). Positions 675–757 (YGPVKGDSIV…NELTEYGPET (83 aa)) constitute a G5 3 domain. In terms of domain architecture, G5 4 spans 803–885 (YGPVKGDSIV…NELTEYGPET (83 aa)). Residues 931–1013 (YGPVKGDSIV…NELTEYGPET (83 aa)) form the G5 5 domain. Residues 1059–1141 (YGPVKGDSIV…NELTEYGPET (83 aa)) form the G5 6 domain. The G5 7 domain maps to 1187–1269 (YGPVKGDSIV…NELTEYGPET (83 aa)). In terms of domain architecture, G5 8 spans 1315-1397 (YGPVKGDSIV…NELTEFGGEK (83 aa)). Residues 1443-1525 (HGPKTGTPET…DKIVEFGGEK (83 aa)) form the G5 9 domain. The segment covering 1481-1495 (QPGSKTITTPITVNP) has biased composition (polar residues). Basic and acidic residues predominate over residues 1509–1539 (EITKQPVDKIVEFGGEKPKDPKGPENPEKPS). Positions 1595–1599 (LPKTG) match the LPXTG sorting signal motif. Threonine 1598 is modified (pentaglycyl murein peptidoglycan amidated threonine). Positions 1599 to 1627 (GLESTQKGLIFSSIIGIAGLMLLARRRKN) are cleaved as a propeptide — removed by sortase.

The protein resides in the secreted. It is found in the cell wall. Its function is as follows. Promotes adhesion of bacterial cells to human squamous nasal epithelial cells, a phenomenon which is likely to be important in nasal colonization. Forms short, extremely dense and thin fibrils all over the bacterial surface. Does not bind to either buccal cells or non-differentiated keratinocytes. Promotes cellular aggregation leading to biofilm formation. In Staphylococcus aureus (strain NCTC 8325 / PS 47), this protein is Surface protein G (sasG).